Here is a 214-residue protein sequence, read N- to C-terminus: Cell division protein B1 (214 aa).

In terms of biological role, part of a cell division machinery. This Sulfolobus acidocaldarius (strain ATCC 33909 / DSM 639 / JCM 8929 / NBRC 15157 / NCIMB 11770) protein is Cell division protein B1.